Consider the following 497-residue polypeptide: Cysteine-rich secretory protein LCCL domain-containing 2 (497 aa).

An N-terminal signal peptide occupies residues 1–22 (MSCVLGGVIPLGLLFLVCGSQG). N-linked (GlcNAc...) asparagine glycosylation occurs at N27. The SCP domain occupies 62–200 (LHNKLRGQVQ…ENAVYFVCNY (139 aa)). 2 LCCL domains span residues 284–379 (MTQV…SSSF) and 385–488 (KVQD…RDGK). Disulfide bonds link C290–C308, C312–C332, C391–C413, and C417–C440.

It belongs to the CRISP family. Binds to heparin, dermatan sulfate and chondroitin sulfate.

The protein resides in the secreted. In terms of biological role, promotes matrix assembly. This chain is Cysteine-rich secretory protein LCCL domain-containing 2 (CRISPLD2), found in Homo sapiens (Human).